A 523-amino-acid chain; its full sequence is Probable endopeptidase p60 (523 aa).

Positions 1 to 27 are cleaved as a signal peptide; it reads MNMKKATIAATAGIAVTAFAAPTIASA. The LysM 1 domain maps to 28–71; the sequence is STVVVEAGDTLWGIAQDNGTTVDALKKANKLTTDKIVPGQKLQV. Residues 78–142 form the SH3b domain; that stretch reads KTEKSVSATW…VNGKYLGNAV (65 aa). The segment at 146 to 188 is disordered; sequence PSATPEVKQEETTQAAPAQQTKTEVKQATPAATTEKDAVETKT. The segment covering 157–167 has biased composition (low complexity); that stretch reads TTQAAPAQQTK. The region spanning 198–241 is the LysM 2 domain; sequence TTHTVKSGDTIWALSVKYGASVQDLMSWNNLSSSSIYVGQNIAV. Low complexity-rich tracts occupy residues 251-282 and 290-318; these read PKAE…TTTT and EKQT…TNAS. Disordered stretches follow at residues 251-323 and 367-408; these read PKAE…YTVK and ATNT…SSSA. The 44-residue stretch at 318 to 361 folds into the LysM 3 domain; that stretch reads SSYTVKSGDTLGKIASTFGTTVSKIKALNGLTSDNLQVGDVLKV. Residues 405–523 form the NlpC/P60 domain; the sequence is SSSASAIIAE…GQYLVGFGRV (119 aa). Cys435 (nucleophile) is an active-site residue. Catalysis depends on His485, which acts as the Proton acceptor. Asn497 is a catalytic residue.

It belongs to the peptidase C40 family.

In terms of biological role, this major extracellular protein may be involved in the invasion of non-professional phagocytic cells by Listeria. The protein is Probable endopeptidase p60 (iap) of Listeria seeligeri.